The following is a 168-amino-acid chain: 3-isopropylmalate dehydratase small subunit (168 aa).

This sequence belongs to the LeuD family. LeuD type 2 subfamily. Heterodimer of LeuC and LeuD.

It carries out the reaction (2R,3S)-3-isopropylmalate = (2S)-2-isopropylmalate. It participates in amino-acid biosynthesis; L-leucine biosynthesis; L-leucine from 3-methyl-2-oxobutanoate: step 2/4. Functionally, catalyzes the isomerization between 2-isopropylmalate and 3-isopropylmalate, via the formation of 2-isopropylmaleate. The protein is 3-isopropylmalate dehydratase small subunit of Thermodesulfovibrio yellowstonii (strain ATCC 51303 / DSM 11347 / YP87).